A 295-amino-acid chain; its full sequence is Ribosomal RNA small subunit methyltransferase A (295 aa).

The S-adenosyl-L-methionine site is built by N29, L31, G56, E77, D102, and N127.

This sequence belongs to the class I-like SAM-binding methyltransferase superfamily. rRNA adenine N(6)-methyltransferase family. RsmA subfamily.

The protein localises to the cytoplasm. The catalysed reaction is adenosine(1518)/adenosine(1519) in 16S rRNA + 4 S-adenosyl-L-methionine = N(6)-dimethyladenosine(1518)/N(6)-dimethyladenosine(1519) in 16S rRNA + 4 S-adenosyl-L-homocysteine + 4 H(+). Specifically dimethylates two adjacent adenosines (A1518 and A1519) in the loop of a conserved hairpin near the 3'-end of 16S rRNA in the 30S particle. May play a critical role in biogenesis of 30S subunits. The polypeptide is Ribosomal RNA small subunit methyltransferase A (Anoxybacillus flavithermus (strain DSM 21510 / WK1)).